The primary structure comprises 232 residues: EEF1A lysine methyltransferase 3 (232 aa).

Residues Trp-57, Gly-83–Gly-85, Asp-104, Trp-133, and Ala-150 contribute to the S-adenosyl-L-methionine site.

The protein belongs to the methyltransferase superfamily. METTL21 family. As to quaternary structure, interacts with members of the heat shock protein 70 and 90 families and of the TCP-1 chaperonin family, as well as with HSPD1, STIP1 and tubulin; at least some of these proteins may be methylation substrates.

Its subcellular location is the cytoplasm. It localises to the cytoskeleton. The protein resides in the microtubule organizing center. It is found in the centrosome. It catalyses the reaction L-lysyl-[protein] + 3 S-adenosyl-L-methionine = N(6),N(6),N(6)-trimethyl-L-lysyl-[protein] + 3 S-adenosyl-L-homocysteine + 3 H(+). It carries out the reaction L-lysyl-[protein] + S-adenosyl-L-methionine = N(6)-methyl-L-lysyl-[protein] + S-adenosyl-L-homocysteine + H(+). The enzyme catalyses N(6)-methyl-L-lysyl-[protein] + S-adenosyl-L-methionine = N(6),N(6)-dimethyl-L-lysyl-[protein] + S-adenosyl-L-homocysteine + H(+). The catalysed reaction is N(6),N(6)-dimethyl-L-lysyl-[protein] + S-adenosyl-L-methionine = N(6),N(6),N(6)-trimethyl-L-lysyl-[protein] + S-adenosyl-L-homocysteine + H(+). Functionally, protein-lysine methyltransferase that selectively mono-, di- and trimethylates 'Lys-165' of the translation elongation factors EEF1A1 and EEF1A2 in an aminoacyl-tRNA and GTP-dependent manner. EEF1A1 methylation by EEF1AKMT3 is dynamic as well as inducible by stress conditions, such as ER-stress, and plays a regulatory role on mRNA translation. The sequence is that of EEF1A lysine methyltransferase 3 from Mus musculus (Mouse).